A 218-amino-acid chain; its full sequence is Chymotrypsin-2 (218 aa).

In terms of domain architecture, Peptidase S1 spans 1–218 (IVGGTDAPRG…FLDWIQKNQL (218 aa)). Cys25 and Cys40 form a disulfide bridge. Residues His39 and Asp84 each act as charge relay system in the active site. Cystine bridges form between Cys148–Cys161 and Cys171–Cys195. The Charge relay system role is filled by Ser175.

Belongs to the peptidase S1 family.

The protein resides in the secreted. It is found in the extracellular space. It catalyses the reaction Preferential cleavage: Tyr-|-Xaa, Trp-|-Xaa, Phe-|-Xaa, Leu-|-Xaa.. This chain is Chymotrypsin-2, found in Vespa crabro (European hornet).